Consider the following 66-residue polypeptide: Large ribosomal subunit protein bL33c (66 aa).

Belongs to the bacterial ribosomal protein bL33 family.

It localises to the plastid. Its subcellular location is the chloroplast. The chain is Large ribosomal subunit protein bL33c from Ipomoea purpurea (Common morning glory).